The sequence spans 426 residues: Cytochrome b-c1 complex subunit 2, mitochondrial (426 aa).

The transit peptide at 1–30 directs the protein to the mitochondrion; the sequence is MKSFTRNLRRFQTPRRNLHGISYTPKKVEG.

The protein belongs to the peptidase M16 family. UQCRC2/QCR2 subfamily. As to quaternary structure, component of the ubiquinol-cytochrome c oxidoreductase (cytochrome b-c1 complex, complex III, CIII), a multisubunit enzyme composed of 3 respiratory subunits cytochrome b, cytochrome c1 and Rieske protein, 2 core protein subunits, and additional low-molecular weight protein subunits. The complex exists as an obligatory dimer and forms supercomplexes (SCs) in the inner mitochondrial membrane with cytochrome c oxidase (complex IV, CIV).

It is found in the mitochondrion inner membrane. In terms of biological role, component of the ubiquinol-cytochrome c oxidoreductase, a multisubunit transmembrane complex that is part of the mitochondrial electron transport chain which drives oxidative phosphorylation. The respiratory chain contains 3 multisubunit complexes succinate dehydrogenase (complex II, CII), ubiquinol-cytochrome c oxidoreductase (cytochrome b-c1 complex, complex III, CIII) and cytochrome c oxidase (complex IV, CIV), that cooperate to transfer electrons derived from NADH and succinate to molecular oxygen, creating an electrochemical gradient over the inner membrane that drives transmembrane transport and the ATP synthase. The cytochrome b-c1 complex catalyzes electron transfer from ubiquinol to cytochrome c, linking this redox reaction to translocation of protons across the mitochondrial inner membrane, with protons being carried across the membrane as hydrogens on the quinol. In the process called Q cycle, 2 protons are consumed from the matrix, 4 protons are released into the intermembrane space and 2 electrons are passed to cytochrome c. The chain is Cytochrome b-c1 complex subunit 2, mitochondrial (qcr2) from Schizosaccharomyces pombe (strain 972 / ATCC 24843) (Fission yeast).